A 155-amino-acid polypeptide reads, in one-letter code: Protein archease-like (155 aa).

Residues Asp-26, Asp-154, and Ile-155 each contribute to the Ca(2+) site.

It belongs to the archease family.

Functionally, component of the tRNA-splicing ligase complex required to facilitate the enzymatic turnover of catalytic subunit RtcB (F16A11.2). The sequence is that of Protein archease-like from Caenorhabditis elegans.